The chain runs to 278 residues: Tryptophan synthase alpha chain (278 aa).

Residues Glu-50 and Asp-61 each act as proton acceptor in the active site.

Belongs to the TrpA family. In terms of assembly, tetramer of two alpha and two beta chains.

It catalyses the reaction (1S,2R)-1-C-(indol-3-yl)glycerol 3-phosphate + L-serine = D-glyceraldehyde 3-phosphate + L-tryptophan + H2O. It functions in the pathway amino-acid biosynthesis; L-tryptophan biosynthesis; L-tryptophan from chorismate: step 5/5. In terms of biological role, the alpha subunit is responsible for the aldol cleavage of indoleglycerol phosphate to indole and glyceraldehyde 3-phosphate. This chain is Tryptophan synthase alpha chain, found in Rhodopseudomonas palustris (strain BisA53).